A 267-amino-acid polypeptide reads, in one-letter code: Membrane-spanning 4-domains subfamily A member 12 (267 aa).

Over 1–91 (MMSSKPTSHA…MNFKEEAKAL (91 aa)) the chain is Cytoplasmic. The helical transmembrane segment at 92–112 (GVIQIMVGLMHIGFGIVLCLI) threads the bilayer. Residues 113–120 (SFSFREVL) are Extracellular-facing. Residues 121–141 (GFASTAVIGGYPFWGGLSFII) traverse the membrane as a helical segment. The Cytoplasmic portion of the chain corresponds to 142–160 (SGSLSVSASKELSRCLVKG). A helical transmembrane segment spans residues 161-181 (SLGMNIVSSILAFIGVILLLV). At 182–200 (DMCINGVAGQDYWAVLSGK) the chain is on the extracellular side. The helical transmembrane segment at 201–221 (GISATLMIFSLLEFFVACATA) threads the bilayer. Residues 222 to 267 (HFANQANTTTNMSVLVIPNMYESNPVTPASSSAPPRCNNYSANAPK) lie on the Cytoplasmic side of the membrane. Residues 248-267 (TPASSSAPPRCNNYSANAPK) are disordered.

The protein belongs to the MS4A family.

The protein localises to the membrane. May be involved in signal transduction as a component of a multimeric receptor complex. This chain is Membrane-spanning 4-domains subfamily A member 12 (MS4A12), found in Homo sapiens (Human).